The following is a 256-amino-acid chain: Dihydromonacolin L-[lovastatin nonaketide synthase] thioesterase (256 aa).

Residues S122, D201, and H229 each act as charge relay system in the active site.

The protein belongs to the LovG family.

It carries out the reaction dihydromonacolin L-[lovastatin nonaketide synthase] + H2O = holo-[lovastatin nonaketide synthase] + dihydromonacolin L carboxylate + H(+). The protein operates within polyketide biosynthesis; lovastatin biosynthesis. Its function is as follows. Esterase; part of the gene cluster that mediates the biosynthesis of lovastatin (also known as mevinolin, mevacor or monacolin K), a hypolipidemic inhibitor of (3S)-hydroxymethylglutaryl-coenzyme A (HMG-CoA) reductase (HMGR). The first step in the biosynthesis of lovastatin is the production of dihydromonacolin L acid by the lovastatin nonaketide synthase lovB and the trans-acting enoyl reductase lovC via condensation of one acetyl-CoA unit and 8 malonyl-CoA units. Dihydromonacolin L acid is released from lovB by the thioesterase lovG. Next, dihydromonacolin L acid is oxidized by the dihydromonacolin L monooxygenase lovA twice to form monacolin J acid. The 2-methylbutyrate moiety of lovastatin is synthesized by the lovastatin diketide synthase lovF via condensation of one acetyl-CoA unit and one malonyl-CoA unit. Finally, the covalent attachment of this moiety to monacolin J acid is catalyzed by the transesterase lovD to yield lovastatin. LovD has broad substrate specificity and can also convert monacolin J to simvastatin using alpha-dimethylbutanoyl-S-methyl-3-mercaptopropionate (DMB-S-MMP) as the thioester acyl donor, and can also catalyze the reverse reaction and function as hydrolase in vitro. LovD has much higher activity with LovF-bound 2-methylbutanoate than with free diketide substrates. In terms of biological role, esterase that catalyzes the release of covalently bound dihydromonacolin L from LovB during lovastatin biosynthesis. The protein is Dihydromonacolin L-[lovastatin nonaketide synthase] thioesterase of Aspergillus terreus (strain NIH 2624 / FGSC A1156).